The chain runs to 341 residues: MIKVGINGYGTIGKRVAYAASIQDDIHVSGIVKNTPDYMAYLASRSFNIYVPDDDKIKEFEDHGIKVKGTLNDLMESSDIIVDATPEGMGMENIKIYKKKRVKAIFQGGEKSNIGDASFNAYSNYNESFKREYTRVVSCNTTALARTLYPILNDYGIENLNVTLIRRATDPNDNRKGPINAIEPSMSFPSHHADDLKTVLNLNNVYTVALKAPTTLMHVHSIEVLLKDDAKIDDIMESWLKYNRILLIEGKDNFKSTAQIMDMARELRRDRGDLYEIAIWRDSVKVIDKRLYYVQAVHQESDVIPENIDAIRSLSGIDKNESIEKTDKSLRISGGIFYGKE.

Residues 11–12 and Gly-109 contribute to the NAD(+) site; that span reads TI. 138–140 is a D-glyceraldehyde 3-phosphate binding site; sequence SCN. Cys-139 (nucleophile) is an active-site residue. Arg-167 serves as a coordination point for NAD(+). Residues Thr-169 and 192-193 each bind D-glyceraldehyde 3-phosphate; that span reads HA. Gln-299 provides a ligand contact to NAD(+).

Belongs to the glyceraldehyde-3-phosphate dehydrogenase family. As to quaternary structure, homotetramer.

Its subcellular location is the cytoplasm. The catalysed reaction is D-glyceraldehyde 3-phosphate + phosphate + NADP(+) = (2R)-3-phospho-glyceroyl phosphate + NADPH + H(+). The enzyme catalyses D-glyceraldehyde 3-phosphate + phosphate + NAD(+) = (2R)-3-phospho-glyceroyl phosphate + NADH + H(+). It participates in carbohydrate degradation; glycolysis; pyruvate from D-glyceraldehyde 3-phosphate: step 1/5. This chain is Glyceraldehyde-3-phosphate dehydrogenase, found in Picrophilus torridus (strain ATCC 700027 / DSM 9790 / JCM 10055 / NBRC 100828 / KAW 2/3).